The primary structure comprises 305 residues: Oxygen-dependent coproporphyrinogen-III oxidase (305 aa).

Ser92 provides a ligand contact to substrate. 2 residues coordinate a divalent metal cation: His96 and His106. Catalysis depends on His106, which acts as the Proton donor. Substrate is bound at residue 108–110 (NVR). Residues His145 and His175 each coordinate a divalent metal cation. The interval 239–274 (YVEFNLLFDRGTLFGLQSGGRAESILISLPPLVRWE) is important for dimerization. 257–259 (GGR) is a substrate binding site.

Belongs to the aerobic coproporphyrinogen-III oxidase family. Homodimer. Requires a divalent metal cation as cofactor.

Its subcellular location is the cytoplasm. It catalyses the reaction coproporphyrinogen III + O2 + 2 H(+) = protoporphyrinogen IX + 2 CO2 + 2 H2O. It functions in the pathway porphyrin-containing compound metabolism; protoporphyrin-IX biosynthesis; protoporphyrinogen-IX from coproporphyrinogen-III (O2 route): step 1/1. Its function is as follows. Involved in the heme biosynthesis. Catalyzes the aerobic oxidative decarboxylation of propionate groups of rings A and B of coproporphyrinogen-III to yield the vinyl groups in protoporphyrinogen-IX. This Xylella fastidiosa (strain M12) protein is Oxygen-dependent coproporphyrinogen-III oxidase.